A 125-amino-acid chain; its full sequence is Large ribosomal subunit protein bL17 (125 aa).

It belongs to the bacterial ribosomal protein bL17 family. As to quaternary structure, part of the 50S ribosomal subunit. Contacts protein L32.

The chain is Large ribosomal subunit protein bL17 from Blochmanniella pennsylvanica (strain BPEN).